Here is a 129-residue protein sequence, read N- to C-terminus: Ribulose bisphosphate carboxylase small subunit (129 aa).

A compositionally biased stretch (basic and acidic residues) spans 104-120; it reads ENEPSLRMTRTESDGRS. The interval 104–129 is disordered; that stretch reads ENEPSLRMTRTESDGRSQHYTWETQR.

The protein belongs to the RuBisCO small chain family. In terms of assembly, heterohexadecamer of 8 large and 8 small subunits.

Its function is as follows. RuBisCO catalyzes two reactions: the carboxylation of D-ribulose 1,5-bisphosphate, the primary event in carbon dioxide fixation, as well as the oxidative fragmentation of the pentose substrate. Both reactions occur simultaneously and in competition at the same active site. Although the small subunit is not catalytic it is essential for maximal activity. The protein is Ribulose bisphosphate carboxylase small subunit of Sinorhizobium medicae (strain WSM419) (Ensifer medicae).